A 277-amino-acid chain; its full sequence is Large ribosomal subunit protein uL2 (277 aa).

The segment at 223–277 is disordered; the sequence is VTMNPVDHPHGGGEGRTSGGRHPVTPWGKPTKGMKTRSNKATDKFIVTSRHKRKK.

Belongs to the universal ribosomal protein uL2 family. In terms of assembly, part of the 50S ribosomal subunit. Forms a bridge to the 30S subunit in the 70S ribosome.

Functionally, one of the primary rRNA binding proteins. Required for association of the 30S and 50S subunits to form the 70S ribosome, for tRNA binding and peptide bond formation. It has been suggested to have peptidyltransferase activity; this is somewhat controversial. Makes several contacts with the 16S rRNA in the 70S ribosome. The chain is Large ribosomal subunit protein uL2 from Azorhizobium caulinodans (strain ATCC 43989 / DSM 5975 / JCM 20966 / LMG 6465 / NBRC 14845 / NCIMB 13405 / ORS 571).